A 429-amino-acid polypeptide reads, in one-letter code: Adenylosuccinate synthetase (429 aa).

GTP is bound by residues 12–18 (GDEGKGK) and 40–42 (GHT). Asp-13 functions as the Proton acceptor in the catalytic mechanism. The Mg(2+) site is built by Asp-13 and Gly-40. IMP is bound by residues 13–16 (DEGK), 38–41 (NAGH), Thr-129, Arg-143, Gln-223, Thr-238, and Arg-302. His-41 functions as the Proton donor in the catalytic mechanism. A substrate-binding site is contributed by 298–304 (VVTGRKR). GTP contacts are provided by residues Arg-304, 330 to 332 (KLD), and 412 to 414 (STS).

This sequence belongs to the adenylosuccinate synthetase family. In terms of assembly, homodimer. Mg(2+) serves as cofactor.

Its subcellular location is the cytoplasm. The enzyme catalyses IMP + L-aspartate + GTP = N(6)-(1,2-dicarboxyethyl)-AMP + GDP + phosphate + 2 H(+). The protein operates within purine metabolism; AMP biosynthesis via de novo pathway; AMP from IMP: step 1/2. Functionally, plays an important role in the de novo pathway of purine nucleotide biosynthesis. Catalyzes the first committed step in the biosynthesis of AMP from IMP. This is Adenylosuccinate synthetase from Maricaulis maris (strain MCS10) (Caulobacter maris).